A 316-amino-acid polypeptide reads, in one-letter code: Methionyl-tRNA formyltransferase (316 aa).

A (6S)-5,6,7,8-tetrahydrofolate-binding site is contributed by 109-112 (SLLP).

This sequence belongs to the Fmt family.

It catalyses the reaction L-methionyl-tRNA(fMet) + (6R)-10-formyltetrahydrofolate = N-formyl-L-methionyl-tRNA(fMet) + (6S)-5,6,7,8-tetrahydrofolate + H(+). In terms of biological role, attaches a formyl group to the free amino group of methionyl-tRNA(fMet). The formyl group appears to play a dual role in the initiator identity of N-formylmethionyl-tRNA by promoting its recognition by IF2 and preventing the misappropriation of this tRNA by the elongation apparatus. The protein is Methionyl-tRNA formyltransferase of Idiomarina loihiensis (strain ATCC BAA-735 / DSM 15497 / L2-TR).